The chain runs to 490 residues: Glutamate--tRNA ligase (490 aa).

Positions 15-25 match the 'HIGH' region motif; it reads PSPTGYLHVGG. Residues 259–263 carry the 'KMSKS' region motif; that stretch reads KLSKR. K262 is a binding site for ATP.

Belongs to the class-I aminoacyl-tRNA synthetase family. Glutamate--tRNA ligase type 1 subfamily. As to quaternary structure, monomer.

The protein resides in the cytoplasm. The catalysed reaction is tRNA(Glu) + L-glutamate + ATP = L-glutamyl-tRNA(Glu) + AMP + diphosphate. Its function is as follows. Catalyzes the attachment of glutamate to tRNA(Glu) in a two-step reaction: glutamate is first activated by ATP to form Glu-AMP and then transferred to the acceptor end of tRNA(Glu). The chain is Glutamate--tRNA ligase from Bdellovibrio bacteriovorus (strain ATCC 15356 / DSM 50701 / NCIMB 9529 / HD100).